The chain runs to 126 residues: Protein ApaG (126 aa).

Positions 2-126 (SFPIDSIKIK…FRLAMPGVMQ (125 aa)) constitute an ApaG domain.

This chain is Protein ApaG, found in Shewanella denitrificans (strain OS217 / ATCC BAA-1090 / DSM 15013).